The following is a 959-amino-acid chain: Glycine dehydrogenase (decarboxylating) (959 aa).

Lysine 704 carries the N6-(pyridoxal phosphate)lysine modification.

This sequence belongs to the GcvP family. In terms of assembly, the glycine cleavage system is composed of four proteins: P, T, L and H. The cofactor is pyridoxal 5'-phosphate.

It carries out the reaction N(6)-[(R)-lipoyl]-L-lysyl-[glycine-cleavage complex H protein] + glycine + H(+) = N(6)-[(R)-S(8)-aminomethyldihydrolipoyl]-L-lysyl-[glycine-cleavage complex H protein] + CO2. In terms of biological role, the glycine cleavage system catalyzes the degradation of glycine. The P protein binds the alpha-amino group of glycine through its pyridoxal phosphate cofactor; CO(2) is released and the remaining methylamine moiety is then transferred to the lipoamide cofactor of the H protein. The chain is Glycine dehydrogenase (decarboxylating) from Parasynechococcus marenigrum (strain WH8102).